Consider the following 174-residue polypeptide: Transcriptional repressor NrdR (174 aa).

A zinc finger spans residues 3–34; it reads CPICHFPETDVIDTRKLYEGEVIRRRRKCRAC. Positions 49 to 139 constitute an ATP-cone domain; that stretch reads LMVVKKDGTR…VYRSFADIGK (91 aa). The interval 151–174 is disordered; sequence EGTRNGHSSAATTDQGTTDNHSRM. Over residues 155 to 174 the composition is skewed to polar residues; it reads NGHSSAATTDQGTTDNHSRM.

Belongs to the NrdR family. The cofactor is Zn(2+).

Negatively regulates transcription of bacterial ribonucleotide reductase nrd genes and operons by binding to NrdR-boxes. This chain is Transcriptional repressor NrdR, found in Chloroflexus aggregans (strain MD-66 / DSM 9485).